The sequence spans 1060 residues: Carbamoyl phosphate synthase large chain (1060 aa).

The segment at 1-401 (MPKRTDIKKI…SLLKAVRSLE (401 aa)) is carboxyphosphate synthetic domain. 12 residues coordinate ATP: R129, R169, G175, G176, K208, I210, E215, G241, I242, H243, Q284, and E298. Residues 133-327 (KQLMEELEQP…IAKLAAKIAV (195 aa)) enclose the ATP-grasp 1 domain. Positions 284, 298, and 300 each coordinate Mg(2+). 3 residues coordinate Mn(2+): Q284, E298, and N300. The interval 402–546 (IGAYHNELAE…YSTYEVENES (145 aa)) is oligomerization domain. The tract at residues 547–929 (NVSKKPSVLV…ALYKAFEASG (383 aa)) is carbamoyl phosphate synthetic domain. Residues 671 to 861 (EQALQELAIP…MAQVATKAIL (191 aa)) enclose the ATP-grasp 2 domain. 10 residues coordinate ATP: R707, S746, L748, E752, G777, V778, H779, S780, Q820, and E832. Mg(2+) contacts are provided by Q820, E832, and N834. Residues Q820, E832, and N834 each coordinate Mn(2+). Residues 930–1060 (LHLPSYGAVL…ESRAFTTEAI (131 aa)) enclose the MGS-like domain. The interval 930–1060 (LHLPSYGAVL…ESRAFTTEAI (131 aa)) is allosteric domain.

This sequence belongs to the CarB family. Composed of two chains; the small (or glutamine) chain promotes the hydrolysis of glutamine to ammonia, which is used by the large (or ammonia) chain to synthesize carbamoyl phosphate. Tetramer of heterodimers (alpha,beta)4. Mg(2+) serves as cofactor. It depends on Mn(2+) as a cofactor.

It carries out the reaction hydrogencarbonate + L-glutamine + 2 ATP + H2O = carbamoyl phosphate + L-glutamate + 2 ADP + phosphate + 2 H(+). The catalysed reaction is hydrogencarbonate + NH4(+) + 2 ATP = carbamoyl phosphate + 2 ADP + phosphate + 2 H(+). The protein operates within amino-acid biosynthesis; L-arginine biosynthesis; carbamoyl phosphate from bicarbonate: step 1/1. It participates in pyrimidine metabolism; UMP biosynthesis via de novo pathway; (S)-dihydroorotate from bicarbonate: step 1/3. Its function is as follows. Large subunit of the glutamine-dependent carbamoyl phosphate synthetase (CPSase). CPSase catalyzes the formation of carbamoyl phosphate from the ammonia moiety of glutamine, carbonate, and phosphate donated by ATP, constituting the first step of 2 biosynthetic pathways, one leading to arginine and/or urea and the other to pyrimidine nucleotides. The large subunit (synthetase) binds the substrates ammonia (free or transferred from glutamine from the small subunit), hydrogencarbonate and ATP and carries out an ATP-coupled ligase reaction, activating hydrogencarbonate by forming carboxy phosphate which reacts with ammonia to form carbamoyl phosphate. In Enterococcus faecalis (strain ATCC 700802 / V583), this protein is Carbamoyl phosphate synthase large chain.